The chain runs to 233 residues: Aspartate/glutamate leucyltransferase (233 aa).

It belongs to the R-transferase family. Bpt subfamily.

It is found in the cytoplasm. The catalysed reaction is N-terminal L-glutamyl-[protein] + L-leucyl-tRNA(Leu) = N-terminal L-leucyl-L-glutamyl-[protein] + tRNA(Leu) + H(+). It carries out the reaction N-terminal L-aspartyl-[protein] + L-leucyl-tRNA(Leu) = N-terminal L-leucyl-L-aspartyl-[protein] + tRNA(Leu) + H(+). In terms of biological role, functions in the N-end rule pathway of protein degradation where it conjugates Leu from its aminoacyl-tRNA to the N-termini of proteins containing an N-terminal aspartate or glutamate. The polypeptide is Aspartate/glutamate leucyltransferase (Vibrio parahaemolyticus serotype O3:K6 (strain RIMD 2210633)).